The following is a 160-amino-acid chain: Transcription elongation factor GreA (160 aa).

Residues 12 to 76 (EGVKKLEEEL…QLENMLKNAS (65 aa)) adopt a coiled-coil conformation.

The protein belongs to the GreA/GreB family.

Functionally, necessary for efficient RNA polymerase transcription elongation past template-encoded arresting sites. The arresting sites in DNA have the property of trapping a certain fraction of elongating RNA polymerases that pass through, resulting in locked ternary complexes. Cleavage of the nascent transcript by cleavage factors such as GreA or GreB allows the resumption of elongation from the new 3'terminus. GreA releases sequences of 2 to 3 nucleotides. This is Transcription elongation factor GreA from Clostridium botulinum (strain Hall / ATCC 3502 / NCTC 13319 / Type A).